We begin with the raw amino-acid sequence, 700 residues long: MATLTQKFHGLLQHPLEPLFLPKNDGTLFYDLPERFLTSRYSPIGQNLANRFGPNSPASSQVSNDTGVPPTVVTIKDLDELPDLTFATWIKRRDSFSLFNPEHRKAAGKLTKLFLDQPNADRLVDVAAYARDRLNAPLFQYALSVALLHRPDTKSVSVPSLLHLFPDQFIDPAAQVRMMEEGSIVLDENRMPIPIPMNYTATDAEPEQRMAFFREDIGVNLHHWHWHLVYPASGPPDVVRKDRRGELFYYMHQQLLARYQIDRYAQGLGRIEPLANLREPVREAYYPKLLRTSNNRTFCPRYPGMTISDVARSADRLEVRIADIESWLPRVLEAIDAGFAVSDDGVRVPLDETRGIDVLGNILERSAISINRNLYGDVHNMGHVLLAFIHDPRGTYLESSGVMGGVATAMRDPIFYRWHKFIDNIFLRNKARLAPYTMAELSNSNVTLEALETQLDRAGGAVNSFVTFWQRSQVDLRAGIDFSAAGSAFVSFTHLQCAPFVYRLRINSTARSNRQDTVRIFLLPRQNEQGRPLSFEDRRLLAIELDSFRVNLRPGMNNIVRQSSNSSVTIPFERTFGNVEQANAGNAQSRFCGCGWPAHMLLPKGNANGVEFDLFAMVSRFEDDNANVNYDENAGCDDSYAFCGLRDRVYPSRRAMGFPFDRRASNGVRSVADFVAPYKNMRLATVTLRFMNTIIDRPTN.

A propeptide spanning residues Met-1 to Arg-51 is cleaved from the precursor. N-linked (GlcNAc...) asparagine glycosylation is found at Asn-64 and Asn-198. His-223, His-227, and His-252 together coordinate Cu cation. Asn-295 carries N-linked (GlcNAc...) asparagine glycosylation. The active-site Proton acceptor is the Glu-364. Cu cation-binding residues include His-379, His-383, and His-419. 3 N-linked (GlcNAc...) asparagine glycosylation sites follow: Asn-445, Asn-507, and Asn-565. 2 disulfide bridges follow: Cys-592–Cys-636 and Cys-594–Cys-643.

Belongs to the tyrosinase family. Homodimer. Requires Cu(2+) as cofactor. Post-translationally, upon activation, a trypsin type protease cleaves prophenol oxidase to yield the active enzyme.

The protein resides in the secreted. The catalysed reaction is 2 tyramine + O2 = 2 dopamine. It carries out the reaction 2 dopamine + O2 = 2 dopamine quinone + 2 H2O. This is a copper-containing oxidase that functions in the formation of pigments such as melanins and other polyphenolic compounds. Catalyzes the oxidation of o-diphenols such as dopamine. Also oxidizes monophenols such as tyramine. This Anopheles gambiae (African malaria mosquito) protein is Phenoloxidase 8.